The chain runs to 881 residues: DNA mismatch repair protein MutS (881 aa).

632–639 provides a ligand contact to ATP; it reads GPNMGGKS.

This sequence belongs to the DNA mismatch repair MutS family.

Functionally, this protein is involved in the repair of mismatches in DNA. It is possible that it carries out the mismatch recognition step. This protein has a weak ATPase activity. The sequence is that of DNA mismatch repair protein MutS from Acinetobacter baylyi (strain ATCC 33305 / BD413 / ADP1).